We begin with the raw amino-acid sequence, 1034 residues long: Integrin alpha-V (1034 aa).

Positions 1-19 (MAALRASLLLSCALTAARA) are cleaved as a signal peptide. Topologically, residues 20–978 (FNLDAERPAV…WGIQPQPMPV (959 aa)) are extracellular. 7 FG-GAP repeats span residues 21–86 (NLDA…RNCQ), 97–158 (DFAP…VEYA), 161–213 (RSTT…LAKY), 225–279 (QLAT…GKNM), 280–345 (SSMY…GGFQ), 346–403 (IAKL…GLNA), and 407–470 (RILE…VNPT). N62 is a glycosylation site (N-linked (GlcNAc...) asparagine). 3 cysteine pairs are disulfide-bonded: C77–C85, C126–C146, and C160–C173. Ca(2+) contacts are provided by D248, D252, I254, and D256. Residues N278 and N284 are each glycosylated (N-linked (GlcNAc...) asparagine). The Ca(2+) site is built by D302, N304, D306, Y308, D310, D367, D369, D371, F373, D375, D431, D433, N435, Y437, and D439. 2 disulfides stabilise this stretch: C479–C488 and C494–C551. N-linked (GlcNAc...) asparagine glycosylation is found at N540 and N601. 2 disulfide bridges follow: C612–C618 and C684–C697. N690, N821, N837, and N860 each carry an N-linked (GlcNAc...) asparagine glycan. 2 cysteine pairs are disulfide-bonded: C838–C900 and C890–C895. N-linked (GlcNAc...) asparagine glycosylation is found at N931, N951, N959, and N966. Residues 979-1002 (PVWVIILAVLAGLLLLAVLVLVMY) traverse the membrane as a helical segment. Residues 1003-1034 (RMGFFKRVRPPQEEQEREQLQPHENGEGTSEA) lie on the Cytoplasmic side of the membrane. Positions 1005-1009 (GFFKR) match the GFFKR motif motif. Positions 1013–1028 (PQEEQEREQLQPHENG) are enriched in basic and acidic residues. The tract at residues 1013–1034 (PQEEQEREQLQPHENGEGTSEA) is disordered.

Belongs to the integrin alpha chain family. In terms of assembly, heterodimer of an alpha and a beta subunit. The alpha subunit is composed of a heavy and a light chain linked by a disulfide bond. Alpha-V (ITGAV) associates with either beta-1 (ITGB1), beta-3 (ITGB3), beta-5 (ITGB5), beta-6 (ITGB6) or beta-8 (ITGB8). Interacts with RAB25. Interacts with CIB1. Integrins ITGAV:ITGB3 and ITGAV:ITGB5 interact with FBLN5 (via N-terminus). ITGAV:ITGB3 and ITGAV:ITGB5 interact with CCN3. ITGAV:ITGB3 interacts with ADGRA2. ITGAV:ITGB3 interacts with FGF2; it is likely that FGF2 can simultaneously bind ITGAV:ITGB3 and FGF receptors. ITGAV:ITGB3 is found in a ternary complex with CX3CR1 and CX3CL1. ITGAV:ITGB3 is found in a ternary complex with NRG1 and ERBB3. ITGAV:ITGB3 is found in a ternary complex with FGF1 and FGFR1. ITGAV:ITGB3 is found in a ternary complex with IGF1 and IGF1R. ITGAV:ITGB3 interacts with IGF2. ITGAV:ITGB3 and ITGAV:ITGB6 interact with FBN1. ITGAV:ITGB3 interacts with CD9, CD81 and CD151 (via second extracellular domain). ITGAV:ITGB6 interacts with TGFB1.

It is found in the membrane. The protein localises to the cell junction. It localises to the focal adhesion. Its function is as follows. The alpha-V (ITGAV) integrins are receptors for vitronectin, cytotactin, fibronectin, fibrinogen, laminin, matrix metalloproteinase-2, osteopontin, osteomodulin, prothrombin, thrombospondin, TGFB1 and vWF. They recognize the sequence R-G-D in a wide array of ligands. Alpha-V integrins may play a role in embryo implantation, angiogenesis and wound healing. ITGAV:ITGB3 binds to fractalkine (CX3CL1) and may act as its coreceptor in CX3CR1-dependent fractalkine signaling. ITGAV:ITGB3 binds to NRG1 (via EGF domain) and this binding is essential for NRG1-ERBB signaling. ITGAV:ITGB3 binds to FGF1 and this binding is essential for FGF1 signaling. ITGAV:ITGB3 binds to FGF2 and this binding is essential for FGF2 signaling. ITGAV:ITGB3 binds to IGF1 and this binding is essential for IGF1 signaling. ITGAV:ITGB3 binds to IGF2 and this binding is essential for IGF2 signaling. ITGAV:ITGB3 binds to IL1B and this binding is essential for IL1B signaling. ITGAV:ITGB3 binds to PLA2G2A via a site (site 2) which is distinct from the classical ligand-binding site (site 1) and this induces integrin conformational changes and enhanced ligand binding to site 1. ITGAV:ITGB3 and ITGAV:ITGB6 act as receptors for fibrillin-1 (FBN1) and mediate R-G-D-dependent cell adhesion to FBN1. Integrin alpha-V/beta-6 or alpha-V/beta-8 (ITGAV:ITGB6 or ITGAV:ITGB8) mediates R-G-D-dependent release of transforming growth factor beta-1 (TGF-beta-1) from regulatory Latency-associated peptide (LAP), thereby playing a key role in TGF-beta-1 activation. ITGAV:ITGB3 acts as a receptor for CD40LG. ITGAV:ITGB3 acts as a receptor for IBSP and promotes cell adhesion and migration to IBSP. The sequence is that of Integrin alpha-V (ITGAV) from Gallus gallus (Chicken).